The chain runs to 304 residues: Eukaryotic translation initiation factor 2 subunit alpha (304 aa).

Residues 17–88 form the S1 motif domain; it reads DDIVMVNVQQ…EKGYIDLSKR (72 aa). S52 carries the post-translational modification Phosphoserine; by GCN2. Residues 283–304 are disordered; that stretch reads LESKELDNRSDSEDDEDESDDE. Residues 284-293 show a composition bias toward basic and acidic residues; it reads ESKELDNRSD. 2 positions are modified to phosphoserine: S292 and S294. Over residues 294–304 the composition is skewed to acidic residues; the sequence is SEDDEDESDDE.

It belongs to the eIF-2-alpha family. In terms of assembly, eukaryotic translation initiation factor 2 eIF2 is a heterotrimeric complex composed of an alpha, a beta and a gamma subunit. The factors eIF-1, eIF-2, eIF-3, TIF5/eIF-5 and methionyl-tRNAi form a multifactor complex (MFC) that may bind to the 40S ribosome. Interacts with CDC123; the interaction is direct. Interacts with GCD1. Post-translationally, phosphorylated; phosphorylation on Ser-52 by the GCN2 protein kinase occurs in response to low amino acid, carbon, or purine availability. Phosphorylation inhibits the guanine nucleotide exchange factor activity of the eIF2B complex.

Its subcellular location is the cytoplasm. It localises to the cytosol. Its function is as follows. eIF-2 functions in the early steps of protein synthesis by forming a ternary complex with GTP and initiator tRNA. This complex binds to a 40S ribosomal subunit, followed by mRNA binding to form a 43S pre-initiation complex. Junction of the 60S ribosomal subunit to form the 80S initiation complex is preceded by hydrolysis of the GTP bound to eIF-2 and release of an eIF-2-GDP binary complex. In order for eIF-2 to recycle and catalyze another round of initiation, the GDP bound to eIF-2 must exchange with GTP by way of a reaction catalyzed by eIF2B. In Saccharomyces cerevisiae (strain ATCC 204508 / S288c) (Baker's yeast), this protein is Eukaryotic translation initiation factor 2 subunit alpha.